Reading from the N-terminus, the 57-residue chain is Large ribosomal subunit protein bL32 (57 aa).

This sequence belongs to the bacterial ribosomal protein bL32 family.

The sequence is that of Large ribosomal subunit protein bL32 from Bacillus anthracis (strain A0248).